The chain runs to 199 residues: Recombination protein RecR (199 aa).

The C4-type zinc-finger motif lies at 57-72 (CNLCNNFSEQEICPLC). The region spanning 80-175 (TLLCIVEMPS…QVSRIARGLP (96 aa)) is the Toprim domain.

It belongs to the RecR family.

Its function is as follows. May play a role in DNA repair. It seems to be involved in an RecBC-independent recombinational process of DNA repair. It may act with RecF and RecO. In Methylobacillus flagellatus (strain ATCC 51484 / DSM 6875 / VKM B-1610 / KT), this protein is Recombination protein RecR.